Consider the following 185-residue polypeptide: ATP synthase subunit delta, chloroplastic (185 aa).

This sequence belongs to the ATPase delta chain family. In terms of assembly, F-type ATPases have 2 components, F(1) - the catalytic core - and F(0) - the membrane proton channel. F(1) has five subunits: alpha(3), beta(3), gamma(1), delta(1), epsilon(1). CF(0) has four main subunits: a(1), b(1), b'(1) and c(10-14). The alpha and beta chains form an alternating ring which encloses part of the gamma chain. F(1) is attached to F(0) by a central stalk formed by the gamma and epsilon chains, while a peripheral stalk is formed by the delta, b and b' chains.

It localises to the plastid. The protein resides in the chloroplast thylakoid membrane. F(1)F(0) ATP synthase produces ATP from ADP in the presence of a proton or sodium gradient. F-type ATPases consist of two structural domains, F(1) containing the extramembraneous catalytic core and F(0) containing the membrane proton channel, linked together by a central stalk and a peripheral stalk. During catalysis, ATP synthesis in the catalytic domain of F(1) is coupled via a rotary mechanism of the central stalk subunits to proton translocation. In terms of biological role, this protein is part of the stalk that links CF(0) to CF(1). It either transmits conformational changes from CF(0) to CF(1) or is implicated in proton conduction. The sequence is that of ATP synthase subunit delta, chloroplastic from Gracilaria tenuistipitata var. liui (Red alga).